A 213-amino-acid chain; its full sequence is Thymidylate kinase (213 aa).

An ATP-binding site is contributed by 7-14 (GMDGSGKT).

The protein belongs to the thymidylate kinase family.

The catalysed reaction is dTMP + ATP = dTDP + ADP. Its function is as follows. Phosphorylation of dTMP to form dTDP in both de novo and salvage pathways of dTTP synthesis. The sequence is that of Thymidylate kinase from Mycoplasma capricolum subsp. capricolum (strain California kid / ATCC 27343 / NCTC 10154).